We begin with the raw amino-acid sequence, 799 residues long: Histidine biosynthesis trifunctional protein (799 aa).

The segment at 1-229 is phosphoribosyl-AMP cyclohydrolase; the sequence is MVLPILPLID…FIVEQENVGF (229 aa). The phosphoribosyl-ATP pyrophosphohydrolase stretch occupies residues 230–312; that stretch reads CHLETMSCFG…FYFALAKLVA (83 aa). A histidinol dehydrogenase region spans residues 313 to 799; the sequence is NDVSLKDVEN…KLGLIPKDFQ (487 aa). Residues Gln-618 and His-621 each contribute to the Zn(2+) site. Active-site residues include Glu-687 and His-688. The Zn(2+) site is built by Asp-721 and His-780.

In the C-terminal section; belongs to the histidinol dehydrogenase family. The cofactor is Zn(2+).

It catalyses the reaction 1-(5-phospho-beta-D-ribosyl)-5'-AMP + H2O = 1-(5-phospho-beta-D-ribosyl)-5-[(5-phospho-beta-D-ribosylamino)methylideneamino]imidazole-4-carboxamide. The enzyme catalyses 1-(5-phospho-beta-D-ribosyl)-ATP + H2O = 1-(5-phospho-beta-D-ribosyl)-5'-AMP + diphosphate + H(+). The catalysed reaction is L-histidinol + 2 NAD(+) + H2O = L-histidine + 2 NADH + 3 H(+). It functions in the pathway amino-acid biosynthesis; L-histidine biosynthesis; L-histidine from 5-phospho-alpha-D-ribose 1-diphosphate: step 2/9. The protein operates within amino-acid biosynthesis; L-histidine biosynthesis; L-histidine from 5-phospho-alpha-D-ribose 1-diphosphate: step 3/9. Its pathway is amino-acid biosynthesis; L-histidine biosynthesis; L-histidine from 5-phospho-alpha-D-ribose 1-diphosphate: step 9/9. This Saccharomyces cerevisiae (strain ATCC 204508 / S288c) (Baker's yeast) protein is Histidine biosynthesis trifunctional protein.